The primary structure comprises 621 residues: uncharacterized protein (621 aa).

Disordered stretches follow at residues 92 to 134 and 268 to 310; these read FRNS…QINQ and KINH…DDEI. A compositionally biased stretch (low complexity) spans 94 to 134; sequence NSSNQSSQSNQVNQSNQSSPSSQISPSSQVNKFNQSSQINQ. The segment covering 296–310 has biased composition (acidic residues); the sequence is TNDETNDETDNDDEI. Positions 354–401 form a coiled coil; that stretch reads ANKIQNKIIQIVETLNAYKNKQSQIAIEAKNKIKHITVSNKEVSENIE.

This is an uncharacterized protein from Acanthamoeba polyphaga mimivirus (APMV).